The primary structure comprises 369 residues: Anhydro-N-acetylmuramic acid kinase (369 aa).

Residue 12-19 (GTSMDGVD) participates in ATP binding.

This sequence belongs to the anhydro-N-acetylmuramic acid kinase family.

It catalyses the reaction 1,6-anhydro-N-acetyl-beta-muramate + ATP + H2O = N-acetyl-D-muramate 6-phosphate + ADP + H(+). Its pathway is amino-sugar metabolism; 1,6-anhydro-N-acetylmuramate degradation. The protein operates within cell wall biogenesis; peptidoglycan recycling. Catalyzes the specific phosphorylation of 1,6-anhydro-N-acetylmuramic acid (anhMurNAc) with the simultaneous cleavage of the 1,6-anhydro ring, generating MurNAc-6-P. Is required for the utilization of anhMurNAc either imported from the medium or derived from its own cell wall murein, and thus plays a role in cell wall recycling. The protein is Anhydro-N-acetylmuramic acid kinase of Shewanella baltica (strain OS223).